The sequence spans 103 residues: Putative RNA-binding protein RbpB (103 aa).

Residues 2–79 form the RRM domain; that stretch reads SIYVGNLSYD…RDLKVNKAKP (78 aa). Residues 74 to 85 are compositionally biased toward basic and acidic residues; it reads VNKAKPREDRGG. The disordered stretch occupies residues 74-103; that stretch reads VNKAKPREDRGGSRGSFGGNRSNNNFRNRY. The span at 92–103 shows a compositional bias: low complexity; that stretch reads GNRSNNNFRNRY.

The sequence is that of Putative RNA-binding protein RbpB (rbpB) from Nostoc sp. (strain PCC 7120 / SAG 25.82 / UTEX 2576).